Reading from the N-terminus, the 607-residue chain is ATP-dependent RNA helicase DBP6 (607 aa).

A disordered region spans residues 1–83 (MFAARFDPSR…GTGEADKRHQ (83 aa)). Over residues 34–59 (QDESESEMSSAESEDEAMQLDDEEEV) the composition is skewed to acidic residues. Positions 60 to 69 (VDSKGKENHG) are enriched in basic and acidic residues. Positions 184-192 (AFPIQTALL) match the Q motif motif. The region spanning 208–388 (RYYTRKVGDI…DLQLHNPKLF (181 aa)) is the Helicase ATP-binding domain. 221 to 228 (ASTGSGKT) is an ATP binding site. The DEAD box motif lies at 328–331 (DEAD). The region spanning 419–578 (ILLRLLPLLS…GSHLFFDEEQ (160 aa)) is the Helicase C-terminal domain.

The protein belongs to the DEAD box helicase family. DDX51/DBP6 subfamily. In terms of assembly, associated with pre-ribosomal particles.

It is found in the nucleus. It localises to the nucleolus. It catalyses the reaction ATP + H2O = ADP + phosphate + H(+). In terms of biological role, ATP-binding RNA helicase involved in the biogenesis of 60S ribosomal subunits and is required for the normal formation of 25S and 5.8S rRNAs. This is ATP-dependent RNA helicase DBP6 (DBP6) from Eremothecium gossypii (strain ATCC 10895 / CBS 109.51 / FGSC 9923 / NRRL Y-1056) (Yeast).